A 213-amino-acid chain; its full sequence is High frequency lysogenization protein HflD homolog (213 aa).

Residues 79-126 (QGLNAELTRYTLSLMVLERKLSSAKGALDTLGNRINGLQRQLEHFDLQ) adopt a coiled-coil conformation.

The protein belongs to the HflD family.

It localises to the cytoplasm. The protein resides in the cell inner membrane. This is High frequency lysogenization protein HflD homolog from Shigella dysenteriae serotype 1 (strain Sd197).